Here is a 218-residue protein sequence, read N- to C-terminus: Imidazole glycerol phosphate synthase subunit HisH (218 aa).

One can recognise a Glutamine amidotransferase type-1 domain in the interval 1–213; the sequence is MTTIIDYGIG…AALPTTEEAG (213 aa). The Nucleophile role is filled by Cys79. Residues His188 and Glu190 contribute to the active site.

As to quaternary structure, heterodimer of HisH and HisF.

It is found in the cytoplasm. It catalyses the reaction 5-[(5-phospho-1-deoxy-D-ribulos-1-ylimino)methylamino]-1-(5-phospho-beta-D-ribosyl)imidazole-4-carboxamide + L-glutamine = D-erythro-1-(imidazol-4-yl)glycerol 3-phosphate + 5-amino-1-(5-phospho-beta-D-ribosyl)imidazole-4-carboxamide + L-glutamate + H(+). The enzyme catalyses L-glutamine + H2O = L-glutamate + NH4(+). The protein operates within amino-acid biosynthesis; L-histidine biosynthesis; L-histidine from 5-phospho-alpha-D-ribose 1-diphosphate: step 5/9. Its function is as follows. IGPS catalyzes the conversion of PRFAR and glutamine to IGP, AICAR and glutamate. The HisH subunit catalyzes the hydrolysis of glutamine to glutamate and ammonia as part of the synthesis of IGP and AICAR. The resulting ammonia molecule is channeled to the active site of HisF. This is Imidazole glycerol phosphate synthase subunit HisH from Salinibacter ruber (strain DSM 13855 / M31).